An 83-amino-acid chain; its full sequence is Colicin-E5 immunity protein in ColE9 (83 aa).

This is Colicin-E5 immunity protein in ColE9 from Escherichia coli.